The sequence spans 298 residues: Glycine--tRNA ligase alpha subunit (298 aa).

The protein belongs to the class-II aminoacyl-tRNA synthetase family. In terms of assembly, tetramer of two alpha and two beta subunits.

The protein localises to the cytoplasm. The catalysed reaction is tRNA(Gly) + glycine + ATP = glycyl-tRNA(Gly) + AMP + diphosphate. The polypeptide is Glycine--tRNA ligase alpha subunit (Helicobacter pylori (strain P12)).